The sequence spans 430 residues: Probable ribosomal RNA small subunit methyltransferase B (430 aa).

S-adenosyl-L-methionine-binding positions include 246 to 252 (CAAPGSK), aspartate 270, aspartate 299, and aspartate 318. The active-site Nucleophile is cysteine 371.

This sequence belongs to the class I-like SAM-binding methyltransferase superfamily. RsmB/NOP family.

Its subcellular location is the cytoplasm. It carries out the reaction cytidine(967) in 16S rRNA + S-adenosyl-L-methionine = 5-methylcytidine(967) in 16S rRNA + S-adenosyl-L-homocysteine + H(+). In terms of biological role, specifically methylates the cytosine at position 967 (m5C967) of 16S rRNA. This is Probable ribosomal RNA small subunit methyltransferase B from Coxiella burnetii (strain RSA 493 / Nine Mile phase I).